A 147-amino-acid polypeptide reads, in one-letter code: Small ribosomal subunit protein uS12 (147 aa).

It belongs to the universal ribosomal protein uS12 family. Part of the 30S ribosomal subunit.

In terms of biological role, with S4 and S5 plays an important role in translational accuracy. Located at the interface of the 30S and 50S subunits. This chain is Small ribosomal subunit protein uS12, found in Thermococcus celer.